The sequence spans 567 residues: TGF-beta receptor type-2 (567 aa).

The N-terminal stretch at 1 to 23 (MGRGLLRGLWPLHIVLWTRIAST) is a signal peptide. The Extracellular portion of the chain corresponds to 24–166 (IPPHVPKSVN…SPDLLLVIIQ (143 aa)). Disulfide bonds link Cys-51/Cys-84, Cys-54/Cys-71, Cys-61/Cys-67, Cys-77/Cys-101, Cys-121/Cys-136, and Cys-138/Cys-143. 2 N-linked (GlcNAc...) asparagine glycosylation sites follow: Asn-70 and Asn-94. A helical transmembrane segment spans residues 167–187 (VTGVSLLPPLGIAIAVIAIFY). Over 188–567 (CYRVHRQQKL…PEDGSLNTTK (380 aa)) the chain is Cytoplasmic. A Protein kinase domain is found at 244–546 (IELDTLVGKG…RFSELEHPDR (303 aa)). Residues 250–258 (VGKGRFAEV) and Lys-277 each bind ATP. Asp-379 (proton acceptor) is an active-site residue. Phosphoserine is present on residues Ser-409, Ser-548, and Ser-553. Positions 546-567 (RLSGRSCSQEKIPEDGSLNTTK) are disordered.

It belongs to the protein kinase superfamily. TKL Ser/Thr protein kinase family. TGFB receptor subfamily. In terms of assembly, homodimer. Heterohexamer; TGFB1, TGFB2 and TGFB3 homodimeric ligands assemble a functional receptor composed of two TGFBR1 and TGFBR2 heterodimers to form a ligand-receptor heterohexamer. The respective affinity of TGFRB1 and TGFRB2 for the ligands may modulate the kinetics of assembly of the receptor and may explain the different biological activities of TGFB1, TGFB2 and TGFB3. Component of a complex composed of TSC22D1 (via N-terminus), TGFBR1 and TGFBR2; the interaction between TSC22D1 and TGFBR1 is inhibited by SMAD7 and promoted by TGFB1. Interacts with DAXX. Interacts with DYNLT4. Interacts with ZFYVE9; ZFYVE9 recruits SMAD2 and SMAD3 to the TGF-beta receptor. Interacts with and is activated by SCUBE3; this interaction does not affect TGFB1-binding to TGFBR2. Interacts with VPS39; this interaction is independent of the receptor kinase activity and of the presence of TGF-beta. Interacts with CLU. It depends on Mg(2+) as a cofactor. The cofactor is Mn(2+). In terms of processing, phosphorylated on a Ser/Thr residue in the cytoplasmic domain.

The protein resides in the cell membrane. The protein localises to the membrane raft. The enzyme catalyses L-threonyl-[receptor-protein] + ATP = O-phospho-L-threonyl-[receptor-protein] + ADP + H(+). The catalysed reaction is L-seryl-[receptor-protein] + ATP = O-phospho-L-seryl-[receptor-protein] + ADP + H(+). Its function is as follows. Transmembrane serine/threonine kinase forming with the TGF-beta type I serine/threonine kinase receptor, TGFBR1, the non-promiscuous receptor for the TGF-beta cytokines TGFB1, TGFB2 and TGFB3. Transduces the TGFB1, TGFB2 and TGFB3 signal from the cell surface to the cytoplasm and is thus regulating a plethora of physiological and pathological processes including cell cycle arrest in epithelial and hematopoietic cells, control of mesenchymal cell proliferation and differentiation, wound healing, extracellular matrix production, immunosuppression and carcinogenesis. The formation of the receptor complex composed of 2 TGFBR1 and 2 TGFBR2 molecules symmetrically bound to the cytokine dimer results in the phosphorylation and the activation of TGFRB1 by the constitutively active TGFBR2. Activated TGFBR1 phosphorylates SMAD2 which dissociates from the receptor and interacts with SMAD4. The SMAD2-SMAD4 complex is subsequently translocated to the nucleus where it modulates the transcription of the TGF-beta-regulated genes. This constitutes the canonical SMAD-dependent TGF-beta signaling cascade. Also involved in non-canonical, SMAD-independent TGF-beta signaling pathways. This is TGF-beta receptor type-2 (Tgfbr2) from Rattus norvegicus (Rat).